The following is a 416-amino-acid chain: POC1 centriolar protein homolog A (416 aa).

WD repeat units follow at residues 16-55 (GHRD…RAYR), 58-97 (GHKD…ESVL), 100-139 (AHTG…IICT), 142-181 (EHNN…LIHT), 184-223 (EPGG…LLQH), 226-265 (VHSA…LLYT), and 268-307 (GHQG…VDYS). Residues 311 to 340 (QQKRDHRTPSAQASGAAGDPESRSGQKTEV) form a disordered region. The stretch at 380-412 (QLDVLTQTVAILEQRLTLTEDKLKECLEQQHQA) forms a coiled coil.

This sequence belongs to the WD repeat POC1 family.

Its function is as follows. May play an important role in centriole assembly and/or stability and ciliogenesis. This chain is POC1 centriolar protein homolog A, found in Danio rerio (Zebrafish).